We begin with the raw amino-acid sequence, 206 residues long: Venom allergen 5 2 (206 aa).

Disulfide bonds link Cys4–Cys16, Cys8–Cys104, Cys28–Cys96, and Cys172–Cys189. Residues 48 to 191 (DEHNRFRQKV…MKSHYLVCNY (144 aa)) form the SCP domain.

Belongs to the CRISP family. Venom allergen 5-like subfamily. Expressed by the venom gland.

The protein localises to the secreted. In Polybia paulista (Neotropical social wasp), this protein is Venom allergen 5 2.